We begin with the raw amino-acid sequence, 333 residues long: Glycogenin-1 (333 aa).

N-acetylthreonine is present on T2. UDP is bound by residues L9, T11, N12, and Y15. UDP-alpha-D-glucose contacts are provided by L9, T11, N12, and Y15. A Phosphoserine; by PKA; in vitro modification is found at S44. Residue R77 coordinates UDP. Positions 77, 86, 102, 103, 104, 133, 134, 160, 163, and 164 each coordinate UDP-alpha-D-glucose. 3 residues coordinate UDP: D102, A103, and D104. Residue D102 coordinates Mn(2+). D104 serves as a coordination point for Mn(2+). Y195 carries O-linked (Glc...) tyrosine glycosylation. Positions 212, 215, and 218 each coordinate UDP. H212 serves as a coordination point for Mn(2+). UDP-alpha-D-glucose is bound by residues G215 and K218. An interaction with GYS1 region spans residues 284–316 (SHLSLGETPATTQPFVSSEERKERWEQGQADYM).

It belongs to the glycosyltransferase 8 family. Glycogenin subfamily. Part of the GYS1-GYG1 complex, a heterooctamer composed of a tetramer of GYS1 and 2 dimers of GYG1, where each GYS1 protomer binds to one GYG1 subunit (via GYG1 C-terminus); the GYS1 tetramer may dissociate from GYG1 dimers to continue glycogen polymerization on its own. May also form a heterooctamer complex with GYS2 (via GYG1 C-terminus). Mn(2+) serves as cofactor. In terms of processing, self-glycosylated by the transfer of glucose residues from UDP-glucose to itself, forming an alpha-1,4-glycan of around 10 residues attached to Tyr-195. Phosphorylated. In terms of tissue distribution, detected in heart, skeletal muscle, brain and testis, and at lower levels in kidney.

It is found in the cytoplasm. The protein resides in the nucleus. It catalyses the reaction L-tyrosyl-[glycogenin] + UDP-alpha-D-glucose = alpha-D-glucosyl-L-tyrosyl-[glycogenin] + UDP + H(+). It carries out the reaction [1,4-alpha-D-glucosyl](n)-L-tyrosyl-[glycogenin] + UDP-alpha-D-glucose = [1,4-alpha-D-glucosyl](n+1)-L-tyrosyl-[glycogenin] + UDP + H(+). It participates in glycan biosynthesis; glycogen biosynthesis. Glycogenin participates in the glycogen biosynthetic process along with glycogen synthase and glycogen branching enzyme. It catalyzes the formation of a short alpha (1,4)-glucosyl chain covalently attached via a glucose 1-O-tyrosyl linkage to internal tyrosine residues and these chains act as primers for the elongation reaction catalyzed by glycogen synthase. This is Glycogenin-1 (GYG1) from Oryctolagus cuniculus (Rabbit).